A 126-amino-acid chain; its full sequence is Small ribosomal subunit protein uS11 (126 aa).

Belongs to the universal ribosomal protein uS11 family. As to quaternary structure, part of the 30S ribosomal subunit. Interacts with proteins S7 and S18. Binds to IF-3.

Its function is as follows. Located on the platform of the 30S subunit, it bridges several disparate RNA helices of the 16S rRNA. Forms part of the Shine-Dalgarno cleft in the 70S ribosome. The polypeptide is Small ribosomal subunit protein uS11 (Orientia tsutsugamushi (strain Boryong) (Rickettsia tsutsugamushi)).